The primary structure comprises 238 residues: MIILPAIDLRMGKCVRLYKGDFNKTEIVAESAVDTALMFKECGAEYIHIVDLDGALKGKGINLDIVCELIKKVDIPIEFGGGIRDIETIDYLIDIGVSRIILGTAALNNEKLVREAIKRYDDKVAVGIDAKNGYVAVEGWLNLSNVNYIDFAKKMESIGVKNIIFTDISRDGTLNGPNFDALLKLKENINCNITASGGIKDVNDIKKLKEFNIYGAIVGKAIYSNNIDLKEAIKLSEK.

The active-site Proton acceptor is aspartate 8. Aspartate 129 (proton donor) is an active-site residue.

It belongs to the HisA/HisF family.

It is found in the cytoplasm. The catalysed reaction is 1-(5-phospho-beta-D-ribosyl)-5-[(5-phospho-beta-D-ribosylamino)methylideneamino]imidazole-4-carboxamide = 5-[(5-phospho-1-deoxy-D-ribulos-1-ylimino)methylamino]-1-(5-phospho-beta-D-ribosyl)imidazole-4-carboxamide. Its pathway is amino-acid biosynthesis; L-histidine biosynthesis; L-histidine from 5-phospho-alpha-D-ribose 1-diphosphate: step 4/9. The chain is 1-(5-phosphoribosyl)-5-[(5-phosphoribosylamino)methylideneamino] imidazole-4-carboxamide isomerase from Clostridium novyi (strain NT).